The primary structure comprises 349 residues: Anaerobic nitrite reductase Glb1-3 (349 aa).

Globin domains lie at 13-162 and 184-333; these read GFTE…AEMK and CFTE…AEMK. Positions 56, 70, 74, 104, 108, 109, 227, 241, 245, 275, 279, and 280 each coordinate heme b.

Belongs to the plant globin family. As to quaternary structure, monomer. Requires heme b as cofactor.

It localises to the cytoplasm. It is found in the nucleus. The catalysed reaction is Fe(III)-heme b-[protein] + nitric oxide + H2O = Fe(II)-heme b-[protein] + nitrite + 2 H(+). Phytoglobin that regulates the fine tuning of nitric oxide (NO) concentration in the cytosol in response to sudden changes in O(2) availability, and performs both symbiotic and nonsymbiotic functions. Exhibits NO dioxygenase activity in the presence of O(2) but nitrite reductase (NiR) activity in the absence of O(2) (e.g. during flooding or in waterlogged soil). May not function as an oxygen storage or transport protein. Extremely reactive toward the physiological ligands O(2), nitric oxide (NO), and nitrite with a very high affinity for O(2) through an hexacoordinate heme iron because of a very low dissociation constant. The protein is Anaerobic nitrite reductase Glb1-3 of Medicago truncatula (Barrel medic).